A 65-amino-acid polypeptide reads, in one-letter code: Orally active insecticidal peptide-3 (65 aa).

An N-terminal signal peptide occupies residues 1-21 (MKTSVLFAILGLALLFCLSFG). A propeptide spanning residues 22–29 (VELEETGR) is cleaved from the precursor. Cystine bridges form between cysteine 31–cysteine 46, cysteine 38–cysteine 51, and cysteine 45–cysteine 58. Proline 62 carries the proline amide modification.

It belongs to the neurotoxin 10 (Hwtx-1) family. 46 (Jztx-7/10/12) subfamily. In terms of tissue distribution, expressed by the venom gland.

The protein localises to the secreted. Its function is as follows. Probable ion channel inhibitor. Shows insecticidal activity when injected into mealworms. This Selenotypus plumipes (Australian featherleg tarantula) protein is Orally active insecticidal peptide-3.